Reading from the N-terminus, the 251-residue chain is Tyrosine transport ATP-binding protein (251 aa).

One can recognise an ABC transporter domain in the interval leucine 2–glutamate 248. Glycine 39–serine 46 is an ATP binding site.

The protein belongs to the ABC transporter superfamily. In terms of assembly, the complex is probably composed of two ATP-binding proteins (CDR20291_0806), two transmembrane proteins (CDR20291_0807) and a solute-binding protein (CDR20291_0805).

It localises to the cell membrane. It catalyses the reaction L-tyrosine(out) + ATP + H2O = L-tyrosine(in) + ADP + phosphate + H(+). Probably part of an ABC transporter complex involved in tyrosine uptake. May also import phenylalanine. Probably responsible for energy coupling to the transport system. This chain is Tyrosine transport ATP-binding protein, found in Clostridioides difficile (strain R20291) (Peptoclostridium difficile).